Consider the following 274-residue polypeptide: Proteasome subunit beta (274 aa).

Positions 1–52 are cleaved as a propeptide — removed in mature form; by autocatalysis; the sequence is MPDPTGVAGRLPAVFMTPGTSSFTDFLSVAAPDLLPGARGPLPAPVTDAAHG. Thr53 acts as the Nucleophile in catalysis.

The protein belongs to the peptidase T1B family. As to quaternary structure, the 20S proteasome core is composed of 14 alpha and 14 beta subunits that assemble into four stacked heptameric rings, resulting in a barrel-shaped structure. The two inner rings, each composed of seven catalytic beta subunits, are sandwiched by two outer rings, each composed of seven alpha subunits. The catalytic chamber with the active sites is on the inside of the barrel. Has a gated structure, the ends of the cylinder being occluded by the N-termini of the alpha-subunits. Is capped by the proteasome-associated ATPase, ARC.

It is found in the cytoplasm. The catalysed reaction is Cleavage of peptide bonds with very broad specificity.. It participates in protein degradation; proteasomal Pup-dependent pathway. Its activity is regulated as follows. The formation of the proteasomal ATPase ARC-20S proteasome complex, likely via the docking of the C-termini of ARC into the intersubunit pockets in the alpha-rings, may trigger opening of the gate for substrate entry. Interconversion between the open-gate and close-gate conformations leads to a dynamic regulation of the 20S proteasome proteolysis activity. Component of the proteasome core, a large protease complex with broad specificity involved in protein degradation. The sequence is that of Proteasome subunit beta from Parafrankia sp. (strain EAN1pec).